Here is a 369-residue protein sequence, read N- to C-terminus: Protein VP6 (369 aa).

2 disordered regions span residues 17-169 (KREL…LQGR) and 184-208 (LDRI…GGDR). The span at 29–68 (LREKGSTEAKSKLKEDGEKKNKSEKEENKIHDDRRVESQK) shows a compositional bias: basic and acidic residues. A compositionally biased stretch (gly residues) spans 92-111 (TGGGDGSAGARTGIGGGGVG). Composition is skewed to basic and acidic residues over residues 137–148 (TGADRVANDDAT) and 196–208 (TEGE…GGDR).

The protein belongs to the orbivirus VP6 family.

The protein localises to the virion. This African horse sickness virus (AHSV) protein is Protein VP6 (Segment-9).